A 332-amino-acid polypeptide reads, in one-letter code: DNA-directed RNA polymerase subunit alpha (332 aa).

An alpha N-terminal domain (alpha-NTD) region spans residues 1 to 231 (MVREKVTVST…DLFIPFLHME (231 aa)). The interval 262–332 (LSLESLFIDQ…FALDLPKNLN (71 aa)) is alpha C-terminal domain (alpha-CTD).

This sequence belongs to the RNA polymerase alpha chain family. As to quaternary structure, in plastids the minimal PEP RNA polymerase catalytic core is composed of four subunits: alpha, beta, beta', and beta''. When a (nuclear-encoded) sigma factor is associated with the core the holoenzyme is formed, which can initiate transcription.

Its subcellular location is the plastid. The catalysed reaction is RNA(n) + a ribonucleoside 5'-triphosphate = RNA(n+1) + diphosphate. Its function is as follows. DNA-dependent RNA polymerase catalyzes the transcription of DNA into RNA using the four ribonucleoside triphosphates as substrates. This Cuscuta japonica (Japanese dodder) protein is DNA-directed RNA polymerase subunit alpha.